The chain runs to 442 residues: Transforming growth factor beta-2 proprotein (442 aa).

A signal peptide spans 1–20 (MHYCVLRTFLLLHLVPVALS). Residues asparagine 72, asparagine 168, and asparagine 269 are each glycosylated (N-linked (GlcNAc...) asparagine). Disulfide bonds link cysteine 337–cysteine 346, cysteine 345–cysteine 408, cysteine 374–cysteine 439, and cysteine 378–cysteine 441.

The protein belongs to the TGF-beta family. In terms of assembly, interacts with the serine proteases, HTRA1 and HTRA3. Interacts with ASPN. Interacts with MFAP5. As to quaternary structure, interacts with Transforming growth factor beta-2 (TGF-beta-2) chain; interaction is non-covalent and maintains (TGF-beta-2) in a latent state. Interacts with LRRC32/GARP; leading to regulate activation of TGF-beta-2. Interacts with NREP; the interaction results in a decrease in TGFB2 autoinduction. Transforming growth factor beta-2: Homodimer; disulfide-linked. Transforming growth factor beta-2: Interacts with TGF-beta receptors (TGFBR1 and TGFBR2), leading to signal transduction. The precursor proprotein is cleaved in the Golgi apparatus to form Transforming growth factor beta-2 (TGF-beta-2) and Latency-associated peptide (LAP) chains, which remain non-covalently linked, rendering TGF-beta-2 inactive. Expressed in cardiomyocytes. As to expression, expressed in the aorta, primary bronchus, uterus, heart, skeletal muscle, sciatic nerve and spinal cord but not in the intestine.

It is found in the secreted. Its subcellular location is the extracellular space. The protein localises to the extracellular matrix. Its function is as follows. Precursor of the Latency-associated peptide (LAP) and Transforming growth factor beta-2 (TGF-beta-2) chains, which constitute the regulatory and active subunit of TGF-beta-2, respectively. Functionally, required to maintain the Transforming growth factor beta-2 (TGF-beta-2) chain in a latent state during storage in extracellular matrix. Associates non-covalently with TGF-beta-2 and regulates its activation via interaction with 'milieu molecules', such as LTBP1 and LRRC32/GARP, that control activation of TGF-beta-2. Multifunctional protein that regulates various processes such as angiogenesis and heart development. Activation into mature form follows different steps: following cleavage of the proprotein in the Golgi apparatus, Latency-associated peptide (LAP) and Transforming growth factor beta-2 (TGF-beta-2) chains remain non-covalently linked rendering TGF-beta-2 inactive during storage in extracellular matrix. At the same time, LAP chain interacts with 'milieu molecules', such as LTBP1 and LRRC32/GARP, that control activation of TGF-beta-2 and maintain it in a latent state during storage in extracellular milieus. Once activated following release of LAP, TGF-beta-2 acts by binding to TGF-beta receptors (TGFBR1 and TGFBR2), which transduce signal. In Rattus norvegicus (Rat), this protein is Transforming growth factor beta-2 proprotein (Tgfb2).